We begin with the raw amino-acid sequence, 930 residues long: RNA-binding protein 10 (930 aa).

Composition is skewed to basic and acidic residues over residues 1-14 (MEYE…DRTG) and 21-45 (RSQD…RSYP). The segment at 1-127 (MEYERRGGRG…EEDEEEEEKA (127 aa)) is disordered. An N-acetylserine modification is found at E2. Phosphoserine occurs at positions 30, 61, and 89. The segment covering 59–70 (DSSEEQSAEDSY) has biased composition (acidic residues). Residues 80 to 89 (RRRRRRHRHS) show a composition bias toward basic residues. Over residues 98–111 (RDGDYRDQDYRTEQ) the composition is skewed to basic and acidic residues. Over residues 112-125 (GEEEEEEEDEEEEE) the composition is skewed to acidic residues. In terms of domain architecture, RRM 1 spans 129 to 209 (NIVMLRMLPQ…QKVSMHYSDP (81 aa)). The RanBP2-type zinc finger occupies 212 to 242 (KINEDWLCNKCGVQNFKRREKCFKCGVPKSE). The region spanning 300-384 (DTIILRNLNP…KTINVEFAKG (85 aa)) is the RRM 2 domain. At K383 the chain carries N6-acetyllysine. 4 disordered regions span residues 466-524 (PGIT…AANS), 537-569 (SELQ…VPDV), 620-685 (EQSA…DERR), and 700-753 (KGAL…EEKL). Residues 508 to 524 (YQQSAEASSSQGTAANS) show a composition bias toward polar residues. Residues 541–557 (SPTHPSSALPPATSPTA) show a composition bias toward low complexity. 3 stretches are compositionally biased toward basic and acidic residues: residues 623-639 (ADGH…GKEK), 653-669 (KDME…KENF), and 700-709 (KGALAERQHT). Phosphoserine is present on residues S718, S723, S733, S736, and S738. The span at 743 to 753 (ERGGPEREEKL) shows a compositional bias: basic and acidic residues. A C2H2-type; atypical zinc finger spans residues 759–784 (LACLLCRRQFPSKEALIRHQQLSGLH). A phosphoserine mark is found at S781 and S797. Residues 815-826 (RDRAAERREKYG) show a composition bias toward basic and acidic residues. Residues 815-861 (RDRAAERREKYGIPEPPEPKRRKYGGISTASVDFEQPTRDGLGSDNI) form a disordered region. Position 845 is a phosphoserine (S845). Residues 858 to 904 (SDNIGSRMLQAMGWKEGSGLGRKKQGIVTPIEAQTRVRGSGLGARGS) enclose the G-patch domain. R902 is subject to Omega-N-methylarginine.

As to quaternary structure, associates with the spliceosome. Component of a large chromatin remodeling complex, at least composed of MYSM1, PCAF, RBM10 and KIF11/TRIP5.

It localises to the nucleus. Binds to ssRNA containing the consensus sequence 5'-AGGUAA-3'. May be involved in post-transcriptional processing, most probably in mRNA splicing. Binds to RNA homopolymers, with a preference for poly(G) and poly(U) and little for poly(A). May bind to specific miRNA hairpins. The sequence is that of RNA-binding protein 10 from Homo sapiens (Human).